Consider the following 396-residue polypeptide: Chalcone synthase A (396 aa).

Cys-170 is a catalytic residue.

This sequence belongs to the thiolase-like superfamily. Chalcone/stilbene synthases family.

The catalysed reaction is (E)-4-coumaroyl-CoA + 3 malonyl-CoA + 3 H(+) = 2',4,4',6'-tetrahydroxychalcone + 3 CO2 + 4 CoA. It functions in the pathway secondary metabolite biosynthesis; flavonoid biosynthesis. Its function is as follows. The primary product of this enzyme is 4,2',4',6'-tetrahydroxychalcone (also termed naringenin-chalcone or chalcone) which can under specific conditions spontaneously isomerize into naringenin. This chain is Chalcone synthase A (CHSA), found in Ipomoea purpurea (Common morning glory).